The chain runs to 609 residues: Sterol O-acyltransferase 2 (609 aa).

Over residues 1–15 (MGRTNTSDQLNAISD) the composition is skewed to polar residues. The tract at residues 1 to 41 (MGRTNTSDQLNAISDKNTKRKSLALDNEYHNNSSSEDDSSK) is disordered. Helical transmembrane passes span 152–172 (FFGM…NNLI), 195–215 (LFKV…AFFV), 229–249 (VGWW…LWIA), 253–273 (CLDF…VFIM), 402–422 (WSYV…MILI), and 451–471 (FLLM…FFLI). The FYXDWWN motif signature appears at 490–496 (FYGPWWS). Helical transmembrane passes span 534–554 (AAII…YVIF) and 589–609 (IICW…YLVF). The active site involves His-546.

This sequence belongs to the membrane-bound acyltransferase family. Sterol o-acyltransferase subfamily.

The protein resides in the endoplasmic reticulum membrane. Its activity is regulated as follows. Inhibited by the protoberberine derivative HWY-289 in a non-competitive manner. Inhibited by miconazole. Not inhibited by CI-976, polyoxin D, amphotericin B or nikkomycin Z. Its function is as follows. Sterol O-acyltransferase that catalyzes the formation of stery esters. This is Sterol O-acyltransferase 2 from Candida albicans (Yeast).